The following is an 83-amino-acid chain: Small ribosomal subunit protein uS17 (83 aa).

It belongs to the universal ribosomal protein uS17 family. Part of the 30S ribosomal subunit.

One of the primary rRNA binding proteins, it binds specifically to the 5'-end of 16S ribosomal RNA. In Chlamydia trachomatis serovar L2 (strain ATCC VR-902B / DSM 19102 / 434/Bu), this protein is Small ribosomal subunit protein uS17.